Consider the following 128-residue polypeptide: uncharacterized protein (128 aa).

3 consecutive transmembrane segments (helical) span residues 30-50 (ILFT…LGSS), 65-85 (VFRG…LGIQ), and 93-113 (WEVA…PDIV).

It localises to the cell membrane. This is an uncharacterized protein from Rickettsia prowazekii (strain Madrid E).